We begin with the raw amino-acid sequence, 376 residues long: Chaperone protein DnaJ (376 aa).

Residues 5-70 (DYYEVLGVAR…NKRRAYDAHG (66 aa)) form the J domain. The CR-type zinc-finger motif lies at 132–209 (GIERRIEIPT…CHGAGRVEED (78 aa)). The Zn(2+) site is built by Cys145, Cys148, Cys161, Cys164, Cys183, Cys186, Cys197, and Cys200. CXXCXGXG motif repeat units lie at residues 145-152 (CEPCHGSG), 161-168 (CATCHGRG), 183-190 (CPHCDGRG), and 197-204 (CKTCHGAG).

Belongs to the DnaJ family. As to quaternary structure, homodimer. Zn(2+) serves as cofactor.

The protein localises to the cytoplasm. In terms of biological role, participates actively in the response to hyperosmotic and heat shock by preventing the aggregation of stress-denatured proteins and by disaggregating proteins, also in an autonomous, DnaK-independent fashion. Unfolded proteins bind initially to DnaJ; upon interaction with the DnaJ-bound protein, DnaK hydrolyzes its bound ATP, resulting in the formation of a stable complex. GrpE releases ADP from DnaK; ATP binding to DnaK triggers the release of the substrate protein, thus completing the reaction cycle. Several rounds of ATP-dependent interactions between DnaJ, DnaK and GrpE are required for fully efficient folding. Also involved, together with DnaK and GrpE, in the DNA replication of plasmids through activation of initiation proteins. This chain is Chaperone protein DnaJ, found in Xanthomonas campestris pv. campestris (strain 8004).